The chain runs to 130 residues: Small ribosomal subunit protein uS9 (130 aa).

The protein belongs to the universal ribosomal protein uS9 family.

This is Small ribosomal subunit protein uS9 from Streptococcus gordonii (strain Challis / ATCC 35105 / BCRC 15272 / CH1 / DL1 / V288).